A 203-amino-acid chain; its full sequence is LexA repressor (203 aa).

Positions Arg-32–Arg-52 form a DNA-binding region, H-T-H motif. Residues Ser-121 and Lys-158 each act as for autocatalytic cleavage activity in the active site.

The protein belongs to the peptidase S24 family. In terms of assembly, homodimer.

It catalyses the reaction Hydrolysis of Ala-|-Gly bond in repressor LexA.. Functionally, represses a number of genes involved in the response to DNA damage (SOS response), including recA and lexA. In the presence of single-stranded DNA, RecA interacts with LexA causing an autocatalytic cleavage which disrupts the DNA-binding part of LexA, leading to derepression of the SOS regulon and eventually DNA repair. This chain is LexA repressor, found in Aromatoleum aromaticum (strain DSM 19018 / LMG 30748 / EbN1) (Azoarcus sp. (strain EbN1)).